The primary structure comprises 515 residues: MSALIIQLSRVVGTLREEAGFLWKYAAFMVFIYLLLPKPAYKTNVRVPTIKFMSPWLPGIISRLLFNSKAPSVIYDGYSKYKTSAYKLLKPDGDLVVLSTRYAEELRQLPASTLNALEATFSDHVGEYTTILTDSHLHTETIQKRLTPAIGRLIPRIISELDYAFQVEFPNCDNQFVAINSYEVFLRLVARVGARIFIGDELCREEKWLKASIDYTKNIFLTIALLRPFPGFLHPIVGRILPSSRSLDRQLVYIKEELLGPLINKRRSLEAVSDSNYEKPDDFLQWMMDLAKTEKESHPHNLAQRLLGITSMAVVHTSAMSMTHILYDLLVMPQWVQPLRDEIQTEIADWRSTTQSNLNNLRVMDSFLKESQRFNPPGELSFHRVVKHDLTLSDGLLLPKGTHICMAAGPISMDPEVVENPDVFDAFRFVKEKVPTSGFVSTGPSHMHFGLGRYACPGRFFASIVMKLILSRFLAQYEFHFAPDQTERPRNLLIGDKIVPNVSTPIFIKNRAPEI.

The helical transmembrane segment at 20 to 36 threads the bilayer; sequence GFLWKYAAFMVFIYLLL. Heme is bound at residue Cys-456. Asn-501 carries N-linked (GlcNAc...) asparagine glycosylation.

The protein belongs to the cytochrome P450 family. Requires heme as cofactor.

The protein localises to the membrane. It participates in secondary metabolite biosynthesis. In terms of biological role, cytochrome P450 monooxygenase; part of the gene cluster that mediates the biosynthesis of the indole diterpenes janthitremanes such as shearinine K or shearinine A. The geranylgeranyl diphosphate (GGPP) synthase janG catalyzes the first step in janthitremane biosynthesis via conversion of farnesyl pyrophosphate and isopentyl pyrophosphate into geranylgeranyl pyrophosphate (GGPP). Condensation of indole-3-glycerol phosphate with GGPP by the prenyl transferase janC then forms 3-geranylgeranylindole (3-GGI). Epoxidation by the FAD-dependent monooxygenase janM leads to a epoxidized-GGI that is substrate of the terpene cyclase janB for cyclization to yield paspaline. Paspaline is subsequently converted to 13-desoxypaspaline by the cytochrome P450 monooxygenase janP, via beta-PC-M6 in a series of alpha-face oxidations. The cytochrome P450 monooxygenase janQ is proposed to carry out sequential beta-face oxidation steps at C-7 and C-13 of 13-desoxypaspaline to form paspalicine and paspalinine respectively. The indole diterpene prenyltransferase janD may then convert paspalinine into shearinine K which is substrate of janO and/or additional enzymes for oxidation and cyclization to generate shearinine A. The protein is Cytochrome P450 monooxygenase janP of Penicillium janthinellum (Penicillium vitale).